A 1451-amino-acid polypeptide reads, in one-letter code: Dual 3',5'-cyclic-AMP and -GMP phosphodiesterase 11 (1451 aa).

Disordered regions lie at residues 1–54 (MGQA…PQIQ), 75–100 (ATTPLQFQPTGRMNTEQGGTGYGGYG), 125–169 (LPAH…QVQQ), 235–262 (GNDVVSSTSPTHANGQTSSSRGGSGATT), and 327–374 (QHHH…GSGG). A compositionally biased stretch (basic residues) spans 11 to 21 (RGCRYKNKNKS). A compositionally biased stretch (low complexity) spans 24 to 45 (QQQQQQQQQQQQQQQHQQQQQQ). Positions 77–91 (TPLQFQPTGRMNTEQ) are enriched in polar residues. 2 stretches are compositionally biased toward low complexity: residues 135–147 (SGAAPPSSSNGSS) and 160–169 (QQQQQYQVQQ). The span at 235-248 (GNDVVSSTSPTHAN) shows a compositional bias: polar residues. Over residues 327 to 340 (QHHHNHAHLHHSQH) the composition is skewed to basic residues. The segment covering 341–355 (SHYQAGGAVGSSSLG) has biased composition (low complexity). Residues 356-374 (STGGASGAGGAPSLGGSGG) are compositionally biased toward gly residues. GAF domains are found at residues 419–572 (EVRT…GIGL) and 604–754 (TIEH…GMGI). Positions 783 to 1107 (ATMDEAHRLR…GHWIDLADVV (325 aa)) constitute a PDEase domain. Histidine 860 serves as the catalytic Proton donor. Residues histidine 864, histidine 900, aspartate 901, and aspartate 1011 each coordinate a divalent metal cation. Disordered stretches follow at residues 1109–1171 (TKTS…SNTN), 1200–1248 (DEQA…TPVS), 1268–1305 (QTSNQAQTQKQRCKSCDHSRSGLQVRKTSSLRGAQELD), and 1325–1364 (INNHSHHHNHSHSHNHNHHHHHHHHSHHNHSQHGIGIGSA). Low complexity-rich tracts occupy residues 1142 to 1171 (ASEAEVAVDSPSEKASVNGSNVANNSSNTN) and 1218 to 1234 (CRSNSTCSSSTASSCLS). Residues 1268-1277 (QTSNQAQTQK) are compositionally biased toward polar residues. The span at 1328 to 1355 (HSHHHNHSHSHNHNHHHHHHHHSHHNHS) shows a compositional bias: basic residues.

The protein belongs to the cyclic nucleotide phosphodiesterase family. It depends on a divalent metal cation as a cofactor. As to expression, in adults, it is enriched in Malpighian tubules.

The catalysed reaction is 3',5'-cyclic GMP + H2O = GMP + H(+). It catalyses the reaction 3',5'-cyclic AMP + H2O = AMP + H(+). Its function is as follows. Plays a role in signal transduction by regulating the intracellular concentration of cyclic nucleotides cAMP and cGMP. Dual-specificity phosphodiesterase that catalyzes the hydrolysis of both cAMP and cGMP to 5'-AMP and 5'-GMP, respectively. The polypeptide is Dual 3',5'-cyclic-AMP and -GMP phosphodiesterase 11 (Pde11) (Drosophila melanogaster (Fruit fly)).